Here is a 261-residue protein sequence, read N- to C-terminus: Kallikrein 1-related peptidase b9 (261 aa).

The signal sequence occupies residues 1-18 (MRFLILFLALSLGGIDAA). The propeptide at 19–24 (PPVHSR) is activation peptide. The Peptidase S1 domain occupies 25 to 258 (IVGGFKCEKN…FTSWIKDTMA (234 aa)). Cystine bridges form between cysteine 31/cysteine 173, cysteine 50/cysteine 66, cysteine 152/cysteine 219, cysteine 184/cysteine 198, and cysteine 209/cysteine 234. Residue histidine 65 is the Charge relay system of the active site. Asparagine 102 carries an N-linked (GlcNAc...) asparagine glycan. Aspartate 120 serves as the catalytic Charge relay system. The active-site Charge relay system is the serine 213.

This sequence belongs to the peptidase S1 family. Kallikrein subfamily.

It catalyses the reaction Preferential cleavage of Arg-|-Xaa bonds in small molecule substrates. Highly selective action to release kallidin (lysyl-bradykinin) from kininogen involves hydrolysis of Met-|-Xaa or Leu-|-Xaa.. In terms of biological role, glandular kallikreins cleave Met-Lys and Arg-Ser bonds in kininogen to release Lys-bradykinin. The protein is Kallikrein 1-related peptidase b9 (Klk1b9) of Mus musculus (Mouse).